The following is a 255-amino-acid chain: Sporulation-specific N-acetylmuramoyl-L-alanine amidase (255 aa).

The region spanning 4-172 (IFIDPGHGGS…LARGHANGLE (169 aa)) is the MurNAc-LAA domain. Histidine 10, glutamate 24, and histidine 79 together coordinate Zn(2+). The active site involves glutamate 141. In terms of domain architecture, SPOR spans 180-254 (TSSSGLYKVQ…AGFDAIVILE (75 aa)). 2 repeat units span residues 184-219 (GLYK…LLKD) and 220-255 (GLYK…ILES). The segment at 184–255 (GLYKVQIGAF…GFDAIVILES (72 aa)) is 2 X 35 AA approximate tandem repeats.

The protein belongs to the N-acetylmuramoyl-L-alanine amidase 3 family. Requires Zn(2+) as cofactor.

The protein resides in the secreted. Its subcellular location is the cell wall. The catalysed reaction is Hydrolyzes the link between N-acetylmuramoyl residues and L-amino acid residues in certain cell-wall glycopeptides.. Its activity is regulated as follows. Inhibited by EDTA. Autolysins are involved in some important biological processes such as cell separation, cell-wall turnover, competence for genetic transformation, formation of the flagella - in particular of its basal body - and sporulation. CwlC is able to hydrolyze type A cell walls such as B.subtilis. Its main function is to lyze the mother cell wall peptidoglycan, playing a role during sporulation. The protein is Sporulation-specific N-acetylmuramoyl-L-alanine amidase (cwlC) of Bacillus subtilis (strain 168).